Consider the following 528-residue polypeptide: MFSLQDLCRKNTFFLPNDFKKHTLQLLGLYWKEHGSVHRAEKDNIMIQNELILTVNDALQLAGEEGDTDVVQLLLLWEGNLHYAIIGALKAENYNLICEYHSQIEDWHALLPLIQDPETFEKCHELSLGCDLLCLLQHAIKCNMLSILVKYKEDLLNARIRHRIQSLFVLACETRRIEIILWIGQNLPIPEPETIFSIAVITKDLELFSLGYKIIFDYMQRQGIFQLSEVVRKILLNRHIDMAVNKGLLPFVLETFKYGGSVKRALSCAVMDNKRKVIDYLVRHENISHQTIERLLYLAVKKHSSRKTLNLLLSYINYKVKNIKKLLDHVLGGNSTLVLKILLEKKQNLVDAALTRLVKHSTYFRVKEFIEDFSISPEKFIKIAVREQKNVIIKVICEDIWENPAERIRYLKQIVSSIKYESGRQFLINIIHTIYQSHSLKPEEIFKLATFYVKHNAVTHFKDLCKFLWLNRGTESKKHFLKCLEIADEKDFPAIKSIVSEYINYMFTAGTMTKDEIMQAYASEYTMC.

It belongs to the asfivirus MGF 505 family. In terms of assembly, interacts with host STING1. Interacts with host JAK1; this interaction leads to JAK1 degradation. Interacts with host JAK2; this interaction leads to JAK2 degradation. Interacts with host RELA; this interaction inhibits NF-kappa-B promoter activity.

It localises to the host cytoplasm. In terms of biological role, plays a role in virus cell tropism, and may be required for efficient virus replication in macrophages. Interferes with host NF-kappa-B promoter activity mediated by TLR8. Mechanistically, inhibits the phosphorylation and subsequent nuclear translocation of host NF-kappa-B RELA subunit downstream of TLR8. Promotes the expression of the autophagy-related protein host ULK1 to degrade host STING and inhibit the interferon response. Also inhibits JAK1- and JAK2-mediated signaling and thus negatively regulates the IFN-gamma signaling. This chain is Protein MGF 505-7R, found in African swine fever virus (isolate Pig/Kenya/KEN-50/1950) (ASFV).